The primary structure comprises 263 residues: Small ribosomal subunit protein eS4, Y isoform 1 (263 aa).

In terms of domain architecture, S4 RNA-binding spans 42–104 (LPLIIFLRNR…TGEHFRLVYD (63 aa)).

Belongs to the eukaryotic ribosomal protein eS4 family.

This is Small ribosomal subunit protein eS4, Y isoform 1 (RPS4Y1) from Monodelphis domestica (Gray short-tailed opossum).